The primary structure comprises 475 residues: Aspartyl/glutamyl-tRNA(Asn/Gln) amidotransferase subunit B (475 aa).

This sequence belongs to the GatB/GatE family. GatB subfamily. As to quaternary structure, heterotrimer of A, B and C subunits.

It catalyses the reaction L-glutamyl-tRNA(Gln) + L-glutamine + ATP + H2O = L-glutaminyl-tRNA(Gln) + L-glutamate + ADP + phosphate + H(+). The enzyme catalyses L-aspartyl-tRNA(Asn) + L-glutamine + ATP + H2O = L-asparaginyl-tRNA(Asn) + L-glutamate + ADP + phosphate + 2 H(+). Its function is as follows. Allows the formation of correctly charged Asn-tRNA(Asn) or Gln-tRNA(Gln) through the transamidation of misacylated Asp-tRNA(Asn) or Glu-tRNA(Gln) in organisms which lack either or both of asparaginyl-tRNA or glutaminyl-tRNA synthetases. The reaction takes place in the presence of glutamine and ATP through an activated phospho-Asp-tRNA(Asn) or phospho-Glu-tRNA(Gln). This chain is Aspartyl/glutamyl-tRNA(Asn/Gln) amidotransferase subunit B, found in Pediococcus pentosaceus (strain ATCC 25745 / CCUG 21536 / LMG 10740 / 183-1w).